We begin with the raw amino-acid sequence, 353 residues long: Mitochondrial distribution and morphology protein 10 (353 aa).

The protein belongs to the MDM10 family. Component of the ER-mitochondria encounter structure (ERMES) or MDM complex, composed of MMM1, MDM10, MDM12 and MDM34. Associates with the mitochondrial outer membrane sorting assembly machinery SAM(core) complex.

It is found in the mitochondrion outer membrane. Component of the ERMES/MDM complex, which serves as a molecular tether to connect the endoplasmic reticulum and mitochondria. Components of this complex are involved in the control of mitochondrial shape and protein biogenesis and may function in phospholipid exchange. MDM10 is involved in the late assembly steps of the general translocase of the mitochondrial outer membrane (TOM complex). Functions in the TOM40-specific route of the assembly of outer membrane beta-barrel proteins, including the association of TOM40 with the receptor TOM22 and small TOM proteins. Can associate with the SAM(core) complex as well as the MDM12-MMM1 complex, both involved in late steps of the major beta-barrel assembly pathway, that is responsible for biogenesis of all outer membrane beta-barrel proteins. May act as a switch that shuttles between both complexes and channels precursor proteins into the TOM40-specific pathway. Plays a role in mitochondrial morphology and in the inheritance of mitochondria. This Yarrowia lipolytica (strain CLIB 122 / E 150) (Yeast) protein is Mitochondrial distribution and morphology protein 10.